Here is a 154-residue protein sequence, read N- to C-terminus: Myoglobin (154 aa).

The region spanning 2–148 (GLSDGEWQLV…FRNDMAAQYK (147 aa)) is the Globin domain. The residue at position 4 (Ser4) is a Phosphoserine. His65 serves as a coordination point for nitrite. His65 contacts O2. At Thr68 the chain carries Phosphothreonine. His94 is a heme b binding site.

It belongs to the globin family. As to quaternary structure, monomeric.

Its subcellular location is the cytoplasm. The protein localises to the sarcoplasm. The catalysed reaction is Fe(III)-heme b-[protein] + nitric oxide + H2O = Fe(II)-heme b-[protein] + nitrite + 2 H(+). It carries out the reaction H2O2 + AH2 = A + 2 H2O. Functionally, monomeric heme protein which primary function is to store oxygen and facilitate its diffusion within muscle tissues. Reversibly binds oxygen through a pentacoordinated heme iron and enables its timely and efficient release as needed during periods of heightened demand. Depending on the oxidative conditions of tissues and cells, and in addition to its ability to bind oxygen, it also has a nitrite reductase activity whereby it regulates the production of bioactive nitric oxide. Under stress conditions, like hypoxia and anoxia, it also protects cells against reactive oxygen species thanks to its pseudoperoxidase activity. This is Myoglobin (MB) from Cervus elaphus (Red deer).